The chain runs to 357 residues: Dual-specificity RNA methyltransferase RlmN (357 aa).

Glu-89 functions as the Proton acceptor in the catalytic mechanism. Positions Glu-109–Asp-340 constitute a Radical SAM core domain. A disulfide bridge connects residues Cys-116 and Cys-345. Residues Cys-123, Cys-127, and Cys-130 each contribute to the [4Fe-4S] cluster site. S-adenosyl-L-methionine contacts are provided by residues Gly-173 to Glu-174, Ser-203, Ser-226 to His-228, and Asn-302. Cys-345 functions as the S-methylcysteine intermediate in the catalytic mechanism.

This sequence belongs to the radical SAM superfamily. RlmN family. Requires [4Fe-4S] cluster as cofactor.

Its subcellular location is the cytoplasm. The catalysed reaction is adenosine(2503) in 23S rRNA + 2 reduced [2Fe-2S]-[ferredoxin] + 2 S-adenosyl-L-methionine = 2-methyladenosine(2503) in 23S rRNA + 5'-deoxyadenosine + L-methionine + 2 oxidized [2Fe-2S]-[ferredoxin] + S-adenosyl-L-homocysteine. The enzyme catalyses adenosine(37) in tRNA + 2 reduced [2Fe-2S]-[ferredoxin] + 2 S-adenosyl-L-methionine = 2-methyladenosine(37) in tRNA + 5'-deoxyadenosine + L-methionine + 2 oxidized [2Fe-2S]-[ferredoxin] + S-adenosyl-L-homocysteine. Its function is as follows. Specifically methylates position 2 of adenine 2503 in 23S rRNA and position 2 of adenine 37 in tRNAs. m2A2503 modification seems to play a crucial role in the proofreading step occurring at the peptidyl transferase center and thus would serve to optimize ribosomal fidelity. In Helicobacter pylori (strain HPAG1), this protein is Dual-specificity RNA methyltransferase RlmN.